Reading from the N-terminus, the 136-residue chain is S-protein homolog 17 (136 aa).

The signal sequence occupies residues 1–22 (MKNLSIFMFVFSLCMFGHVSRA).

The protein belongs to the plant self-incompatibility (S1) protein family.

It localises to the secreted. This is S-protein homolog 17 from Arabidopsis thaliana (Mouse-ear cress).